Here is a 308-residue protein sequence, read N- to C-terminus: Cytochrome b (308 aa).

4 helical membrane-spanning segments follow: residues 1–21 (FGSLLGICLLTQIITGLLLAT), 45–66 (WLIRNLHANGASFFFICIYIHI), 81–101 (WNVGVILLLTLMATAFVGYVL), and 146–166 (FFALHFLLPFAITGLTLVHLT). Residues His51 and His65 each contribute to the heme b site. Heme b is bound by residues His150 and His164. Residue His169 participates in a ubiquinone binding. The next 3 helical transmembrane spans lie at 194–214 (MKDILGFALMIIPLAALALFS), 256–276 (LGGVLALAASILVLFLIPLLH), and 288–308 (LSQILFWTLVANLLILTWVGS).

Belongs to the cytochrome b family. The cytochrome bc1 complex contains 11 subunits: 3 respiratory subunits (MT-CYB, CYC1 and UQCRFS1), 2 core proteins (UQCRC1 and UQCRC2) and 6 low-molecular weight proteins (UQCRH/QCR6, UQCRB/QCR7, UQCRQ/QCR8, UQCR10/QCR9, UQCR11/QCR10 and a cleavage product of UQCRFS1). This cytochrome bc1 complex then forms a dimer. Heme b is required as a cofactor.

The protein resides in the mitochondrion inner membrane. Component of the ubiquinol-cytochrome c reductase complex (complex III or cytochrome b-c1 complex) that is part of the mitochondrial respiratory chain. The b-c1 complex mediates electron transfer from ubiquinol to cytochrome c. Contributes to the generation of a proton gradient across the mitochondrial membrane that is then used for ATP synthesis. The polypeptide is Cytochrome b (MT-CYB) (Ptiloprora plumbea (Leaden honeyeater)).